We begin with the raw amino-acid sequence, 77 residues long: Large ribosomal subunit protein uL24c (77 aa).

Belongs to the universal ribosomal protein uL24 family. As to quaternary structure, part of the 50S ribosomal subunit.

It localises to the plastid. It is found in the chloroplast. Its function is as follows. One of two assembly initiator proteins, it binds directly to the 5'-end of the 23S rRNA, where it nucleates assembly of the 50S subunit. The protein is Large ribosomal subunit protein uL24c (rpl24) of Trieres chinensis (Marine centric diatom).